Here is a 1487-residue protein sequence, read N- to C-terminus: Adhesion G protein-coupled receptor L2 (1487 aa).

Residues 1–25 (MVSSGCRMRSLWFIIIISFSPSTEG) form the signal peptide. At 26-855 (FSRAALPFGL…VHHLLLTVIT (830 aa)) the chain is on the extracellular side. The SUEL-type lectin domain occupies 41-130 (SCEGYSIDLR…KYLEVQYECV (90 aa)). The N-linked (GlcNAc...) asparagine glycan is linked to asparagine 99. An Olfactomedin-like domain is found at 139–398 (VCPGTLKAIV…ILRYSLEFGP (260 aa)). Residues 423-439 (STTSSASQRGPVSSTAA) show a composition bias toward polar residues. The disordered stretch occupies residues 423 to 461 (STTSSASQRGPVSSTAAGPQDGSRGTKPPPAVSTTKIPP). Asparagine 524 and asparagine 735 each carry an N-linked (GlcNAc...) asparagine glycan. Positions 663–841 (TRVSMPTENI…AILMAHREIA (179 aa)) constitute a GAIN-B domain. 2 disulfide bridges follow: cysteine 792-cysteine 823 and cysteine 811-cysteine 825. Positions 792–841 (CSFWNYSERTMMGYWSTQGCKLVDTNKTRTTCACSHLTNFAILMAHREIA) are GPS. Positions 829 to 841 (TNFAILMAHREIA) are stachel. Residues 856–876 (WVGIVVSLVCLAICIFTFCFF) traverse the membrane as a helical segment. Topologically, residues 877-884 (RGLQSDRN) are cytoplasmic. A helical membrane pass occupies residues 885-905 (TIHKNLCINLFIAEFIFLIGI). Topologically, residues 906–911 (DKTKYT) are extracellular. A helical transmembrane segment spans residues 912 to 932 (IACPVFAGLLHFFFLAAFSWM). At 933 to 955 (CLEGVQLYLMLVEVFESEYSRKK) the chain is on the cytoplasmic side. The chain crosses the membrane as a helical span at residues 956-976 (YYYVAGYLFPATVVGVSAAID). At 977 to 994 (YKSYGTVQACWLHVDNYF) the chain is on the extracellular side. A helical transmembrane segment spans residues 995–1015 (IWSFIGPVTFIILLNIIFLVI). Residues 1016–1064 (TLCKMVKHSNTLKPDSSRLENINNYRVCDGYYNTDLPGYEDNKPFIKSW) lie on the Cytoplasmic side of the membrane. A helical transmembrane segment spans residues 1065-1085 (VLGAFALLCLLGLTWSFGLLF). Topologically, residues 1086–1090 (VNEET) are extracellular. The helical transmembrane segment at 1091–1111 (VVMAYLFTAFNAFQGLFIFIF) threads the bilayer. The disordered stretch occupies residues 1386 to 1430 (EADDHLQSPNRDSLYTSMPNLRDSPYPESSPDMAEDLSPSRRSEN). Over residues 1392-1404 (QSPNRDSLYTSMP) the composition is skewed to polar residues. Residues serine 1402, serine 1437, and serine 1458 each carry the phosphoserine modification.

Belongs to the G-protein coupled receptor 2 family. Adhesion G-protein coupled receptor (ADGR) subfamily. As to quaternary structure, heterodimer of 2 chains generated by proteolytic processing; the large extracellular N-terminal fragment and the membrane-bound C-terminal fragment predominantly remain associated and non-covalently linked. Post-translationally, autoproteolytically processed at the GPS region of the GAIN-B domain; this cleavage modulates receptor activity. As to expression, ubiquitously expressed. In neurons, specifically localizes to dendritic domains of CA1 pyramidal neurons in the S. lacunosummoleculare.

It is found in the postsynaptic cell membrane. With respect to regulation, forms a heterodimer of 2 chains generated by proteolytic processing that remain associated through non-covalent interactions mediated by the GAIN-B domain. In the inactivated receptor, the Stachel sequence (also named stalk) is embedded in the GAIN-B domain, where it adopts a beta-strand conformation. On activation, the Stachel moves into the 7 transmembrane region and adopts a twisted hook-shaped configuration that forms contacts within the receptor, leading to coupling of a G-alpha protein, which activates signaling. The cleaved GAIN-B and N-terminal domains can then dissociate from the rest of the receptor. In terms of biological role, orphan adhesion G-protein coupled receptor (aGPCR), which mediates synapse specificity. Ligand binding causes a conformation change that triggers signaling via guanine nucleotide-binding proteins (G proteins) and modulates the activity of downstream effectors. Following G-protein coupled receptor activation, associates with cell adhesion molecules that are expressed at the surface of adjacent cells to direct synapse specificity. Specifically mediates the establishment of perforant-path synapses on CA1-region pyramidal neurons in the hippocampus. Localizes to postsynaptic spines in excitatory synapses in the S.lacunosum-moleculare and interacts with presynaptic cell adhesion molecules, such as teneurins, promoting synapse formation. This Mus musculus (Mouse) protein is Adhesion G protein-coupled receptor L2.